The primary structure comprises 380 residues: Glucose-1-phosphate adenylyltransferase (380 aa).

Alpha-D-glucose 1-phosphate-binding positions include Gly-164, 179-180 (EK), and Ser-190.

It belongs to the bacterial/plant glucose-1-phosphate adenylyltransferase family. Homotetramer.

It catalyses the reaction alpha-D-glucose 1-phosphate + ATP + H(+) = ADP-alpha-D-glucose + diphosphate. It participates in glycan biosynthesis; glycogen biosynthesis. Functionally, involved in the biosynthesis of ADP-glucose, a building block required for the elongation reactions to produce glycogen. Catalyzes the reaction between ATP and alpha-D-glucose 1-phosphate (G1P) to produce pyrophosphate and ADP-Glc. The sequence is that of Glucose-1-phosphate adenylyltransferase from Streptococcus pneumoniae serotype 2 (strain D39 / NCTC 7466).